The primary structure comprises 343 residues: MTQETITTDVVIVGAGPCGLFAVFELGLLDMKCHLVDILDKPGGQCAELYPEKPIYDIPALPVVSGHELTERLMEQAAPFGPQYHYNEMVEEVQKLEDGRWRVKTDGGLVFEAKVVVIAAGGGSFQPKKPPIPGIEAYEGKSVFYAVKRMETFRGKNVLISGGGDSALDWTINLHPIVQSMQLIHRRDGFRAAPDSVNKMHALVEEKKMQFHLGQITSLHGDNGQLEGVTVKGNDGADYQIECDTLLPFFGLTMKLGPIANWGINLHENLIPVDTEKFQTSEPGLFAIGDINTYPGKLKLILSGFHEAALMAQAAFRYANPDAKLTFQYTTSSTSLQKKLGVA.

FAD contacts are provided by C18, D37, Q45, Y50, V90, F125, D290, and T331.

Belongs to the ferredoxin--NADP reductase type 2 family. As to quaternary structure, homodimer. The cofactor is FAD.

The catalysed reaction is 2 reduced [2Fe-2S]-[ferredoxin] + NADP(+) + H(+) = 2 oxidized [2Fe-2S]-[ferredoxin] + NADPH. The polypeptide is Ferredoxin--NADP reductase (Parvibaculum lavamentivorans (strain DS-1 / DSM 13023 / NCIMB 13966)).